The sequence spans 66 residues: MGMRMRMMFTVFLLVVLANTVVSFPSDRDSDGADAEASDEPVEFERDENGCCWNPSCPRPRCTGRR.

A signal peptide spans 1–23; that stretch reads MGMRMRMMFTVFLLVVLANTVVS. Residues 24–46 constitute a propeptide that is removed on maturation; that stretch reads FPSDRDSDGADAEASDEPVEFER. A disordered region spans residues 25 to 48; the sequence is PSDRDSDGADAEASDEPVEFERDE. Residues 32–42 show a composition bias toward acidic residues; the sequence is GADAEASDEPV. 2 disulfides stabilise this stretch: cysteine 51–cysteine 57 and cysteine 52–cysteine 62. Residue threonine 63 is modified to Threonine amide.

The protein belongs to the conotoxin A superfamily. In terms of tissue distribution, expressed by the venom duct.

Its subcellular location is the secreted. This chain is Conotoxin Bu1.4, found in Conus bullatus (Bubble cone).